Consider the following 163-residue polypeptide: MRRLLIPLALWLGAVGVGVAELTEAQRRGLQVALEEFHKHPPVQWAFQETSVESAVDTPFPAGIFVRLEFKLQQTSCRKRDWKKPECKVRPNGRKRKCLACIKLGSEDKVLGRLVHCPIETQVLREAEEHQETQCLRVQRAGEDPHSFYFPGQFAFSKALPRS.

A signal peptide spans M1 to A20. Disulfide bonds link C77/C87, C98/C117, and C101/C135. Residues K158–S163 constitute a propeptide that is removed on maturation.

Secreted in an inactive precursor form, prochemerin, which is proteolytically processed by a variety of extracellular proteases to generate forms with differing levels of bioactivity. For example, the removal of six amino acids results in chemerin-157, which exhibits the highest activity, while removal of seven amino acids results in chemerin-156 which has slightly less activity. Some proteases are able to cleave at more than one site and chemerin forms may be sequentially processed by different enzymes to modulate activity levels. The coordinated expression and activity of chemerin-modifying enzymes is essential for regulating its bioactivation, inactivation and, consequently, biological function. Cathepsin G cleaves seven C-terminal amino acids from prochemerin (chemerin-156), elastase is able to cleave six (chemerin-157), eight (chemerin-155) or eleven (chemerin-152), plasmin cleaves five amino acids (chemerin-158), and tryptase cleaves five (chemerin-158) or eight (chemerin-155). Multiple cleavages might be required to fully activate chemerin, with an initial tryptase cleavage resulting in chemerin with low activity (chemerin-158), and a second cleavage by carboxypeptidase N or B producing highly active chemerin (chemerin-157). As to expression, expressed at the highest levels in placenta, liver, and white adipose tissue (WAT), and to a lesser extent in many other tissues such as lung, brown adipose tissue, heart, ovary, kidney, skeletal muscle and pancreas. Within WAT, expression is enriched in adipocytes as compared to the stromal vascular fraction. Expression and secretion increases dramatically with adipogenesis. Highly expressed in skin (basal and suprabasal layers of the epidermis, hair follicles and endothelial cells). Expression is elevated in numerous metabolic and inflammatory diseases including psoriasis, obesity, type 2 diabetes, metabolic syndrome and cardiovascular disease.

It is found in the secreted. In terms of biological role, adipocyte-secreted protein (adipokine) that regulates adipogenesis, metabolism and inflammation through activation of the chemokine-like receptor 1 (CMKLR1). Also acts as a ligand for CMKLR2. Can also bind to C-C chemokine receptor-like 2 (CCRL2), but with a lower affinity than it does to CMKLR1 or CMKLR2. Positively regulates adipocyte differentiation, modulates the expression of adipocyte genes involved in lipid and glucose metabolism and might play a role in angiogenesis, a process essential for the expansion of white adipose tissue. Also acts as a pro-inflammatory adipokine, causing an increase in secretion of pro-inflammatory and prodiabetic adipokines, which further impair adipose tissue metabolic function and have negative systemic effects including impaired insulin sensitivity, altered glucose and lipid metabolism, and a decrease in vascular function in other tissues. Can have both pro- and anti-inflammatory properties depending on the modality of enzymatic cleavage by different classes of proteases. Acts as a chemotactic factor for leukocyte populations expressing CMKLR1, particularly immature plasmacytoid dendritic cells, but also immature myeloid DCs, macrophages and natural killer cells. Exerts an anti-inflammatory role by preventing TNF/TNFA-induced VCAM1 expression and monocytes adhesion in vascular endothelial cells. The effect is mediated via inhibiting activation of NF-kappa-B and CRK/p38 through stimulation of AKT1/NOS3 signaling and nitric oxide production. Its dual role in inflammation and metabolism might provide a link between chronic inflammation and obesity, as well as obesity-related disorders such as type 2 diabetes and cardiovascular disease. Exhibits an antimicrobial function in the skin. This chain is Retinoic acid receptor responder protein 2 (RARRES2), found in Homo sapiens (Human).